The sequence spans 251 residues: MIVKTDEELQALKEIGYICAKVRDTMKEATKPGVTTRELDHIAKDLFEEHGAISAPIHDENFPGQTCISVNEEVAHGIPGKRVIHEGDLVNIDVSALKNGYYADTGISFVVGKSDQPLKQKVCDVATMAFENAMKKVKPGTKLSNIGKAVHATARQNDLTVIKNLTGHGVGQSLHEAPNHVMNYFDPKDKTLLKEGQVIAVEPFISTHATFVTEGKNEWAFETKDKSYVAQIEHTVIVTKDGPLLTTKIDD.

His-76 is a binding site for substrate. Asp-93, Asp-104, and His-168 together coordinate a divalent metal cation. His-175 lines the substrate pocket. A divalent metal cation is bound by residues Glu-202 and Glu-233.

It belongs to the peptidase M24A family. Methionine aminopeptidase type 1 subfamily. As to quaternary structure, monomer. Co(2+) is required as a cofactor. Zn(2+) serves as cofactor. The cofactor is Mn(2+). Requires Fe(2+) as cofactor.

It catalyses the reaction Release of N-terminal amino acids, preferentially methionine, from peptides and arylamides.. Its function is as follows. Removes the N-terminal methionine from nascent proteins. The N-terminal methionine is often cleaved when the second residue in the primary sequence is small and uncharged (Met-Ala-, Cys, Gly, Pro, Ser, Thr, or Val). Requires deformylation of the N(alpha)-formylated initiator methionine before it can be hydrolyzed. The protein is Methionine aminopeptidase of Staphylococcus epidermidis (strain ATCC 35984 / DSM 28319 / BCRC 17069 / CCUG 31568 / BM 3577 / RP62A).